A 505-amino-acid chain; its full sequence is Deoxyguanosinetriphosphate triphosphohydrolase (505 aa).

The 208-residue stretch at 66–273 (RLTHSMEVQQ…MEAADDISYC (208 aa)) folds into the HD domain.

The protein belongs to the dGTPase family. Type 1 subfamily. Homotetramer. Requires Mg(2+) as cofactor.

It carries out the reaction dGTP + H2O = 2'-deoxyguanosine + triphosphate + H(+). In terms of biological role, dGTPase preferentially hydrolyzes dGTP over the other canonical NTPs. This chain is Deoxyguanosinetriphosphate triphosphohydrolase, found in Salmonella enteritidis PT4 (strain P125109).